We begin with the raw amino-acid sequence, 542 residues long: Calcium/calmodulin-dependent protein kinase type II subunit beta (542 aa).

Positions 14–272 (YQLYEDIGKG…AHEALKHPWV (259 aa)) constitute a Protein kinase domain. Phosphotyrosine is present on tyrosine 17. ATP contacts are provided by residues 20–28 (IGKGAFSVV) and lysine 43. Aspartate 136 (proton acceptor) is an active-site residue. An autoinhibitory domain region spans residues 283–292 (HRQETVECLK). Threonine 287 carries the post-translational modification Phosphothreonine; by autocatalysis. A calmodulin-binding region spans residues 291-301 (LKKFNARRKLK). Phosphothreonine; by autocatalysis occurs at positions 306 and 307. Positions 349 to 376 (ADGVKPQTNSTKNSSAITSPKGSLPPAA) are disordered. The segment covering 354–369 (PQTNSTKNSSAITSPK) has biased composition (polar residues). Phosphoserine is present on residues serine 367, serine 371, serine 394, and serine 397. 2 positions are modified to phosphothreonine: threonine 400 and threonine 401.

It belongs to the protein kinase superfamily. CAMK Ser/Thr protein kinase family. CaMK subfamily. In terms of assembly, CAMK2 is composed of 4 different chains: alpha (CAMK2A), beta (CAMK2B), gamma (CAMK2G), and delta (CAMK2D). The different isoforms assemble into homo- or heteromultimeric holoenzymes composed of 12 subunits with two hexameric rings stacked one on top of the other. Interacts with SYNGAP1, CAMK2N2 and MPDZ. Interacts with FOXO3. Interacts (when in a kinase inactive state not associated with calmodulin) with ARC; leading to target ARC to inactive synapses. Interacts with CAMK2N1; this interaction requires CAMK2B activation by Ca(2+). In terms of processing, autophosphorylation of Thr-287 following activation by Ca(2+)/calmodulin. Phosphorylation of Thr-287 locks the kinase into an activated state.

It localises to the cytoplasm. It is found in the cytoskeleton. The protein resides in the microtubule organizing center. Its subcellular location is the centrosome. The protein localises to the sarcoplasmic reticulum membrane. It localises to the synapse. The catalysed reaction is L-seryl-[protein] + ATP = O-phospho-L-seryl-[protein] + ADP + H(+). It carries out the reaction L-threonyl-[protein] + ATP = O-phospho-L-threonyl-[protein] + ADP + H(+). Its activity is regulated as follows. Activated by Ca(2+)/calmodulin. Binding of calmodulin results in conformational change that relieves intrasteric autoinhibition and allows autophosphorylation of Thr-287 which turns the kinase in a constitutively active form and confers to the kinase a Ca(2+)-independent activity. Calcium/calmodulin-dependent protein kinase that functions autonomously after Ca(2+)/calmodulin-binding and autophosphorylation, and is involved in dendritic spine and synapse formation, neuronal plasticity and regulation of sarcoplasmic reticulum Ca(2+) transport in skeletal muscle. In neurons, plays an essential structural role in the reorganization of the actin cytoskeleton during plasticity by binding and bundling actin filaments in a kinase-independent manner. This structural function is required for correct targeting of CaMK2A, which acts downstream of NMDAR to promote dendritic spine and synapse formation and maintain synaptic plasticity which enables long-term potentiation (LTP) and hippocampus-dependent learning. In developing hippocampal neurons, promotes arborization of the dendritic tree and in mature neurons, promotes dendritic remodeling. Also regulates the migration of developing neurons. Participates in the modulation of skeletal muscle function in response to exercise. In slow-twitch muscles, is involved in regulation of sarcoplasmic reticulum (SR) Ca(2+) transport and in fast-twitch muscle participates in the control of Ca(2+) release from the SR through phosphorylation of triadin, a ryanodine receptor-coupling factor, and phospholamban (PLN/PLB), an endogenous inhibitor of SERCA2A/ATP2A2. In response to interferon-gamma (IFN-gamma) stimulation, catalyzes phosphorylation of STAT1, stimulating the JAK-STAT signaling pathway. Phosphorylates reticulophagy regulator RETREG1 at 'Thr-134' under endoplasmic reticulum stress conditions which enhances RETREG1 oligomerization and its membrane scission and reticulophagy activity. The polypeptide is Calcium/calmodulin-dependent protein kinase type II subunit beta (Camk2b) (Mus musculus (Mouse)).